Here is a 147-residue protein sequence, read N- to C-terminus: Small ribosomal subunit protein uS5 (147 aa).

Residues phenylalanine 9 to valine 72 enclose the S5 DRBM domain.

This sequence belongs to the universal ribosomal protein uS5 family. In terms of assembly, part of the 30S ribosomal subunit. Contacts proteins S4 and S8.

Its function is as follows. With S4 and S12 plays an important role in translational accuracy. Located at the back of the 30S subunit body where it stabilizes the conformation of the head with respect to the body. The polypeptide is Small ribosomal subunit protein uS5 (Campylobacter jejuni subsp. jejuni serotype O:6 (strain 81116 / NCTC 11828)).